Consider the following 290-residue polypeptide: uncharacterized protein (290 aa).

Residues 1-25 (MNKKSILSKTSLGSLFFLFGTALSA) form the signal peptide. A lipid anchor (N-palmitoyl cysteine) is attached at Cys-26. Cys-26 is lipidated: S-diacylglycerol cysteine. The tract at residues 183–203 (GTDSKGSGSNNQNGGVTEKDF) is disordered. Over residues 186–197 (SKGSGSNNQNGG) the composition is skewed to low complexity.

The protein belongs to the MG439/MG440 family.

Its subcellular location is the cell membrane. This is an uncharacterized protein from Mycoplasma pneumoniae (strain ATCC 29342 / M129 / Subtype 1) (Mycoplasmoides pneumoniae).